The sequence spans 461 residues: Pyruvate kinase (461 aa).

Residue arginine 46 coordinates substrate. Residues asparagine 48 and aspartate 80 each coordinate K(+). Asparagine 48 to histidine 51 contributes to the ATP binding site. Residues arginine 87 and lysine 165 each contribute to the ATP site. Glutamate 232 lines the Mg(2+) pocket. Substrate-binding residues include glycine 255, aspartate 256, and threonine 288. Aspartate 256 lines the Mg(2+) pocket.

Belongs to the pyruvate kinase family. As to quaternary structure, homotetramer. A divalent metal cation is required as a cofactor.

The catalysed reaction is pyruvate + ATP = phosphoenolpyruvate + ADP + H(+). The protein operates within carbohydrate degradation; glycolysis; pyruvate from D-glyceraldehyde 3-phosphate: step 5/5. Not activated by classical allosteric effectors. This Pyrobaculum aerophilum (strain ATCC 51768 / DSM 7523 / JCM 9630 / CIP 104966 / NBRC 100827 / IM2) protein is Pyruvate kinase (pyk).